Here is a 126-residue protein sequence, read N- to C-terminus: Large ribosomal subunit protein bL20 (126 aa).

The protein belongs to the bacterial ribosomal protein bL20 family.

Its function is as follows. Binds directly to 23S ribosomal RNA and is necessary for the in vitro assembly process of the 50S ribosomal subunit. It is not involved in the protein synthesizing functions of that subunit. This Acholeplasma laidlawii (strain PG-8A) protein is Large ribosomal subunit protein bL20.